A 165-amino-acid chain; its full sequence is Nascent polypeptide-associated complex subunit alpha (165 aa).

The NAC-A/B domain maps to 14–78; it reads NRNEKKAREL…AKVDNFTQRL (65 aa). In terms of domain architecture, UBA spans 126 to 165; it reads LSNDDIDLVVQQTNATKGQAIKALKEHNGDIVNAIMSLSK.

Belongs to the NAC-alpha family. As to quaternary structure, part of the nascent polypeptide-associated complex (NAC), consisting of EGD2 and EGD1. NAC associates with ribosomes via EGD1.

The protein resides in the cytoplasm. The protein localises to the nucleus. Component of the nascent polypeptide-associated complex (NAC), a dynamic component of the ribosomal exit tunnel, protecting the emerging polypeptides from interaction with other cytoplasmic proteins to ensure appropriate nascent protein targeting. The NAC complex also promotes mitochondrial protein import by enhancing productive ribosome interactions with the outer mitochondrial membrane and blocks the inappropriate interaction of ribosomes translating non-secretory nascent polypeptides with translocation sites in the membrane of the endoplasmic reticulum. EGD2 may also be involved in transcription regulation. The protein is Nascent polypeptide-associated complex subunit alpha (EGD2) of Candida glabrata (strain ATCC 2001 / BCRC 20586 / JCM 3761 / NBRC 0622 / NRRL Y-65 / CBS 138) (Yeast).